We begin with the raw amino-acid sequence, 173 residues long: Co-chaperone protein HscB (173 aa).

In terms of domain architecture, J spans 2-74; it reads DYFTLFGLPA…LKRAEYMLSQ (73 aa).

Belongs to the HscB family. As to quaternary structure, interacts with HscA and stimulates its ATPase activity. Interacts with IscU.

In terms of biological role, co-chaperone involved in the maturation of iron-sulfur cluster-containing proteins. Seems to help targeting proteins to be folded toward HscA. This is Co-chaperone protein HscB from Xenorhabdus nematophila (strain ATCC 19061 / DSM 3370 / CCUG 14189 / LMG 1036 / NCIMB 9965 / AN6).